Here is a 103-residue protein sequence, read N- to C-terminus: Small ribosomal subunit protein uS10 (103 aa).

It belongs to the universal ribosomal protein uS10 family. In terms of assembly, part of the 30S ribosomal subunit.

Functionally, involved in the binding of tRNA to the ribosomes. This is Small ribosomal subunit protein uS10 from Polynucleobacter asymbioticus (strain DSM 18221 / CIP 109841 / QLW-P1DMWA-1) (Polynucleobacter necessarius subsp. asymbioticus).